The primary structure comprises 105 residues: Putative RNA-binding protein RbpF (105 aa).

An RRM domain is found at 2–79 (SIYVGNLSYE…RDLKVNKAKP (78 aa)). Over residues 75–84 (NKAKPKEDRG) the composition is skewed to basic and acidic residues. A disordered region spans residues 75 to 105 (NKAKPKEDRGSFGGGNRGGYGGGGGGGRSRY). Gly residues predominate over residues 85 to 105 (SFGGGNRGGYGGGGGGGRSRY).

The chain is Putative RNA-binding protein RbpF (rbpF) from Nostoc sp. (strain PCC 7120 / SAG 25.82 / UTEX 2576).